The primary structure comprises 109 residues: UPF0060 membrane protein HEAR0108 (109 aa).

Transmembrane regions (helical) follow at residues 7-27 (VALF…PYLW), 33-53 (SIWL…LLSL), 63-83 (AAYG…VDGI), and 87-107 (NWDV…MFAP).

The protein belongs to the UPF0060 family.

It is found in the cell inner membrane. The sequence is that of UPF0060 membrane protein HEAR0108 from Herminiimonas arsenicoxydans.